Consider the following 210-residue polypeptide: Pyrrolidone-carboxylate peptidase (210 aa).

Active-site residues include Glu-80, Cys-143, and His-162.

It belongs to the peptidase C15 family. In terms of assembly, homotetramer.

It localises to the cytoplasm. The enzyme catalyses Release of an N-terminal pyroglutamyl group from a polypeptide, the second amino acid generally not being Pro.. In terms of biological role, removes 5-oxoproline from various penultimate amino acid residues except L-proline. The sequence is that of Pyrrolidone-carboxylate peptidase from Chromobacterium violaceum (strain ATCC 12472 / DSM 30191 / JCM 1249 / CCUG 213 / NBRC 12614 / NCIMB 9131 / NCTC 9757 / MK).